A 110-amino-acid chain; its full sequence is Large ribosomal subunit protein uL22 (110 aa).

The protein belongs to the universal ribosomal protein uL22 family. In terms of assembly, part of the 50S ribosomal subunit.

Its function is as follows. This protein binds specifically to 23S rRNA; its binding is stimulated by other ribosomal proteins, e.g. L4, L17, and L20. It is important during the early stages of 50S assembly. It makes multiple contacts with different domains of the 23S rRNA in the assembled 50S subunit and ribosome. The globular domain of the protein is located near the polypeptide exit tunnel on the outside of the subunit, while an extended beta-hairpin is found that lines the wall of the exit tunnel in the center of the 70S ribosome. The polypeptide is Large ribosomal subunit protein uL22 (Aliarcobacter butzleri (strain RM4018) (Arcobacter butzleri)).